Here is a 675-residue protein sequence, read N- to C-terminus: G-protein-signaling modulator 1 (675 aa).

The mediates association with membranes stretch occupies residues 1 to 509 (MAGPAPPVAD…DLLTKFQSSR (509 aa)). TPR repeat units follow at residues 28 to 61 (CLEL…GTED), 66 to 99 (SAIY…ARTI), 106 to 139 (AKAS…AQEQ), 146 to 181 (ARAL…PPDV), 183 to 202 (ETLC…VKEL), 209 to 242 (GRAY…AKEF), 249 to 282 (RRAY…SRQL), 289 to 322 (AQAC…AQEL), and 329 to 362 (GRAC…SQEI). The tract at residues 364–487 (DRHGELTARM…VRVHVPRTSI (124 aa)) is interaction with STK11/LKB1. Positions 391 to 412 (SEKPDLAGYEAQGARPKRTQRL) are disordered. Residue serine 413 is modified to Phosphoserine. An Omega-N-methylarginine modification is found at arginine 421. The span at 424–442 (LEREQNGDSHHSGDWRGPS) shows a compositional bias: basic and acidic residues. Positions 424-492 (LEREQNGDSH…PRTSIPRAPS (69 aa)) are disordered. Phosphoserine is present on residues serine 445, serine 469, serine 471, serine 492, and serine 493. Basic and acidic residues predominate over residues 454-469 (KYQEGPDAERRPREGS). The GoLoco 1 domain occupies 495-517 (EECFFDLLTKFQSSRMDDQRCPL). Phosphoserine occurs at positions 545 and 569. 3 GoLoco domains span residues 548–570 (TEEF…RASV), 596–618 (GDDF…RCPP), and 630–652 (DEDF…RVDL). Disordered regions lie at residues 610 to 630 (RIDD…TMPD) and 644 to 675 (RMDE…PGAS).

This sequence belongs to the GPSM family. In terms of assembly, interacts with GNAI1, GNAI2 and GNAI3 preferentially in their GDP-bound state. May also interact with GNAO1. Interacts with STK11/LKB1 and MACF1. Interacts with INSC/inscuteable and FRMPD1. In terms of processing, phosphorylation regulates interaction with G(i/o) alpha. As to expression, expressed in intestinal cells.

Its subcellular location is the cytoplasm. It localises to the cytosol. It is found in the endoplasmic reticulum membrane. The protein localises to the golgi apparatus membrane. The protein resides in the cell membrane. Guanine nucleotide dissociation inhibitor (GDI) which functions as a receptor-independent activator of heterotrimeric G-protein signaling. Keeps G(i/o) alpha subunit in its GDP-bound form thus uncoupling heterotrimeric G-proteins signaling from G protein-coupled receptors. Controls spindle orientation and asymmetric cell fate of cerebral cortical progenitors. May also be involved in macroautophagy in intestinal cells. May play a role in drug addiction. The protein is G-protein-signaling modulator 1 (GPSM1) of Homo sapiens (Human).